The chain runs to 143 residues: Large ribosomal subunit protein uL13 (143 aa).

The protein belongs to the universal ribosomal protein uL13 family. In terms of assembly, part of the 50S ribosomal subunit.

Functionally, this protein is one of the early assembly proteins of the 50S ribosomal subunit, although it is not seen to bind rRNA by itself. It is important during the early stages of 50S assembly. This Symbiobacterium thermophilum (strain DSM 24528 / JCM 14929 / IAM 14863 / T) protein is Large ribosomal subunit protein uL13.